The chain runs to 561 residues: Solute carrier family 41 member 2 (561 aa).

Residues 1–150 are Extracellular-facing; sequence MTANTGEPYK…KESSIAMALQ (150 aa). A helical transmembrane segment spans residues 151–171; it reads ILVPFLLAGFGTVSAGMVLDI. Over 172 to 183 the chain is Cytoplasmic; that stretch reads VQHWDVFKNLTE. A helical transmembrane segment spans residues 184–204; that stretch reads VFILVPALLGLKGNLEMTLAS. Residues 205–233 are Extracellular-facing; the sequence is RLSTAVNVGKMDSPIEKWNLIIGNLALKQ. The helical transmembrane segment at 234–254 threads the bilayer; that stretch reads VQATVVGFLAAVFAVILGWIP. The Cytoplasmic portion of the chain corresponds to 255-270; that stretch reads DGKYQLDHAILLCSSS. Residues 271–291 traverse the membrane as a helical segment; sequence VATAFIASLLQGIIMVGVIVG. Residues 292 to 301 lie on the Extracellular side of the membrane; it reads SKKTGINPDN. The helical transmembrane segment at 302 to 322 threads the bilayer; the sequence is VATPIAASFGDLITLAILAWI. Residues 323–333 lie on the Cytoplasmic side of the membrane; it reads SQGLYNCLGSY. The helical transmembrane segment at 334-354 threads the bilayer; it reads AFVSPLVGVFFLAMTPIWIVI. Over 355–364 the chain is Extracellular; sequence ASKHPATRTV. Residues 365–385 traverse the membrane as a helical segment; that stretch reads LHSGWEPVITAMLISSIGGLI. Residues 386–394 are Cytoplasmic-facing; sequence LDTTVSDPN. Residues 395-415 form a helical membrane-spanning segment; the sequence is LVGIVVYTPVINGIGGNLVAI. The Extracellular portion of the chain corresponds to 416–457; sequence QASRISTYLHLYSIPGELPEDAKGCYHPCRTFCGTGVNNKSA. Residues 458 to 478 traverse the membrane as a helical segment; it reads QVLLSLVIPGHLIFLYTIYLM. Residues 479–487 are Cytoplasmic-facing; that stretch reads KSGHTSLTP. Residues 488–508 traverse the membrane as a helical segment; it reads IFVAVYLLAALLQVFALLWIA. The Extracellular segment spans residues 509–531; sequence DWMVHHIWRKGKDPDSFSIPYLT. The helical transmembrane segment at 532–552 threads the bilayer; that stretch reads ALGDLLGTALLAISFHILWII. Residues 553-561 are Cytoplasmic-facing; sequence GDRDGDVGD.

This sequence belongs to the SLC41A transporter family.

The protein localises to the cell membrane. The enzyme catalyses Mg(2+)(in) = Mg(2+)(out). The catalysed reaction is Mn(2+)(in) = Mn(2+)(out). It catalyses the reaction Co(2+)(in) = Co(2+)(out). It carries out the reaction Ni(2+)(in) = Ni(2+)(out). The enzyme catalyses Fe(2+)(in) = Fe(2+)(out). Acts as a plasma-membrane magnesium transporter. Can also mediate the transport of other divalent metal cations in an order of Ba(2+) &gt; Ni(2+) &gt; Co(2+) &gt; Fe(2+) &gt; Mn(2+). In Xenopus laevis (African clawed frog), this protein is Solute carrier family 41 member 2 (slc41a2).